A 542-amino-acid chain; its full sequence is 4-coumarate--CoA ligase 2 (542 aa).

ATP is bound by residues Ser-189, Ser-190, Gly-191, Thr-192, Thr-193, and Lys-197. Positions 239 and 243 each coordinate (E)-4-coumaroyl-AMP. The (E)-caffeoyl-AMP site is built by Tyr-239 and Ser-243. Tyr-239 and Ser-243 together coordinate (E)-feruloyl-AMP. Position 260 (Lys-260) interacts with CoA. The interval 262-331 is SBD1; sequence DIVSFLELIQ…AKFPNAKLGQ (70 aa). (E)-4-coumaroyl-AMP is bound at residue Ala-309. A (E)-caffeoyl-AMP-binding site is contributed by Ala-309. Ala-309 lines the (E)-feruloyl-AMP pocket. ATP-binding residues include Gln-331, Gly-332, and Thr-336. Gly-332, Thr-336, Met-344, Asp-420, Arg-435, Lys-437, and Lys-441 together coordinate (E)-4-coumaroyl-AMP. (E)-caffeoyl-AMP is bound by residues Gly-332, Thr-336, Met-344, Asp-420, Arg-435, Lys-437, and Lys-441. 7 residues coordinate (E)-feruloyl-AMP: Gly-332, Thr-336, Met-344, Asp-420, Arg-435, Lys-437, and Lys-441. Gly-332 and Thr-336 together coordinate AMP. Positions 332 to 399 are SBD2; sequence GYGMTEAGPV…IRGDQIMKGY (68 aa). Residues Asp-420 and Arg-435 each contribute to the ATP site. Asp-420 serves as a coordination point for AMP. Positions 437 and 441 each coordinate AMP. Residues Lys-443 and Gly-444 each coordinate CoA. An AMP-binding site is contributed by Gln-446. ATP is bound at residue Lys-526.

It belongs to the ATP-dependent AMP-binding enzyme family. It depends on Mg(2+) as a cofactor. In terms of tissue distribution, mainly expressed in old stems and, to a lower extent, in flowers (e.g. in ovary), leaves, young stems, shoot tips and patel limbs.

The catalysed reaction is (E)-4-coumarate + ATP + CoA = (E)-4-coumaroyl-CoA + AMP + diphosphate. It catalyses the reaction (E)-caffeate + ATP + CoA = (E)-caffeoyl-CoA + AMP + diphosphate. It carries out the reaction (E)-ferulate + ATP + CoA = (E)-feruloyl-CoA + AMP + diphosphate. The enzyme catalyses (E)-cinnamate + ATP + CoA = (E)-cinnamoyl-CoA + AMP + diphosphate. The catalysed reaction is (E)-4-coumarate + ATP + H(+) = (E)-4-coumaroyl-AMP + diphosphate. It catalyses the reaction (E)-4-coumaroyl-AMP + CoA = (E)-4-coumaroyl-CoA + AMP + H(+). It carries out the reaction (E)-caffeate + ATP + H(+) = (E)-caffeoyl-AMP + diphosphate. The enzyme catalyses (E)-caffeoyl-AMP + CoA = (E)-caffeoyl-CoA + AMP + H(+). The catalysed reaction is (E)-ferulate + ATP + H(+) = (E)-feruloyl-AMP + diphosphate. It catalyses the reaction (E)-feruloyl-AMP + CoA = (E)-feruloyl-CoA + AMP + H(+). It participates in phytoalexin biosynthesis; 3,4',5-trihydroxystilbene biosynthesis; 3,4',5-trihydroxystilbene from trans-4-coumarate: step 1/2. Its function is as follows. Major enzyme of the phenylpropanoid pathway that mediates the production of several precursors for numerous metabolites and regulates carbon flow. Catalyzes the formation of CoA thioesters using 4-coumarate, ferulate, caffeate, and cinnamate as substrates. Follows a two-step reaction mechanism, wherein a (hydroxy)cinnamate substrate first undergoes adenylation by ATP leading to an acyl-AMP, followed by a thioesterification in the presence of CoA to yield the final (hydroxy)cinnamoyl-CoA product. Almost inactive toward sinapate. This Nicotiana tabacum (Common tobacco) protein is 4-coumarate--CoA ligase 2.